The following is a 340-amino-acid chain: Anthranilate phosphoribosyltransferase (340 aa).

Residues Gly81, 84 to 85 (GD), Thr89, 91 to 94 (NIST), 109 to 117 (KHGNRGATS), and Ser121 contribute to the 5-phospho-alpha-D-ribose 1-diphosphate site. Position 81 (Gly81) interacts with anthranilate. Ser93 serves as a coordination point for Mg(2+). An anthranilate-binding site is contributed by Asn112. Arg167 is an anthranilate binding site. The Mg(2+) site is built by Asp225 and Glu226.

It belongs to the anthranilate phosphoribosyltransferase family. Homodimer. It depends on Mg(2+) as a cofactor.

It catalyses the reaction N-(5-phospho-beta-D-ribosyl)anthranilate + diphosphate = 5-phospho-alpha-D-ribose 1-diphosphate + anthranilate. It participates in amino-acid biosynthesis; L-tryptophan biosynthesis; L-tryptophan from chorismate: step 2/5. Functionally, catalyzes the transfer of the phosphoribosyl group of 5-phosphorylribose-1-pyrophosphate (PRPP) to anthranilate to yield N-(5'-phosphoribosyl)-anthranilate (PRA). The chain is Anthranilate phosphoribosyltransferase from Methanocorpusculum labreanum (strain ATCC 43576 / DSM 4855 / Z).